The primary structure comprises 274 residues: NADPH-dependent 7-cyano-7-deazaguanine reductase (274 aa).

Residue 80 to 82 (VES) coordinates substrate. Residue 82–83 (SK) participates in NADPH binding. The active-site Thioimide intermediate is the C181. Residue D188 is the Proton donor of the active site. Substrate is bound at residue 220–221 (HE). 249–250 (RG) provides a ligand contact to NADPH.

It belongs to the GTP cyclohydrolase I family. QueF type 2 subfamily. In terms of assembly, homodimer.

It localises to the cytoplasm. The enzyme catalyses 7-aminomethyl-7-carbaguanine + 2 NADP(+) = 7-cyano-7-deazaguanine + 2 NADPH + 3 H(+). Its pathway is tRNA modification; tRNA-queuosine biosynthesis. Functionally, catalyzes the NADPH-dependent reduction of 7-cyano-7-deazaguanine (preQ0) to 7-aminomethyl-7-deazaguanine (preQ1). This chain is NADPH-dependent 7-cyano-7-deazaguanine reductase, found in Burkholderia thailandensis (strain ATCC 700388 / DSM 13276 / CCUG 48851 / CIP 106301 / E264).